Consider the following 92-residue polypeptide: MEYQYPIDLDWSNDEMMQVVSFFNAVESYYESSVEGEKLLDRYKQFKKIVPGKAEEKQIFKEFENSSGYSSYHAVKAVQSSPDQKLFSAKSK.

It belongs to the UPF0223 family.

This Staphylococcus saprophyticus subsp. saprophyticus (strain ATCC 15305 / DSM 20229 / NCIMB 8711 / NCTC 7292 / S-41) protein is UPF0223 protein SSP1692.